The chain runs to 49 residues: uncharacterized protein (49 aa).

The tract at residues 1–49 (MSNETFEQNEPKPTKVEELQPGDVEAVEDSTPVREITQTDHINKAMLQI) is disordered. A compositionally biased stretch (basic and acidic residues) spans 9-18 (NEPKPTKVEE).

This is an uncharacterized protein from Dictyostelium discoideum (Social amoeba).